A 605-amino-acid polypeptide reads, in one-letter code: Elongation factor 4 (605 aa).

Positions 9-192 constitute a tr-type G domain; it reads CRIRNFCIIA…SIVHRIPPPA (184 aa). GTP contacts are provided by residues 21 to 26 and 139 to 142; these read DHGKST and NKID.

The protein belongs to the TRAFAC class translation factor GTPase superfamily. Classic translation factor GTPase family. LepA subfamily.

It is found in the cell inner membrane. It carries out the reaction GTP + H2O = GDP + phosphate + H(+). Its function is as follows. Required for accurate and efficient protein synthesis under certain stress conditions. May act as a fidelity factor of the translation reaction, by catalyzing a one-codon backward translocation of tRNAs on improperly translocated ribosomes. Back-translocation proceeds from a post-translocation (POST) complex to a pre-translocation (PRE) complex, thus giving elongation factor G a second chance to translocate the tRNAs correctly. Binds to ribosomes in a GTP-dependent manner. This is Elongation factor 4 from Chlorobium chlorochromatii (strain CaD3).